Consider the following 474-residue polypeptide: MFKPSFVALALVSYATAQASAPQWGQCGGIGWTGPTACPSGWACQQLNAYYSQCLQGAAPAPARTTAAPPPPPATTAAPPPPTTSAPTGSSPVAGACGAIASTVPNYNNAKLPDPFTFANGTALRTKADWSCRRAEISALIQNYEAGTLPPKPPVVTASFSKSGNTGTLAITAGLSNSQTIKFSPTISYPSGTPPANGWPLIIAYEGGSIPIPAGVATLTYSNSDMAQQNSASSRGQGLFYQLYGSTHSASAMTAWVWGVSRIIDALEMTPTAQINTQRIGVTGCSRDGKGALMAGAFEERIALTIPQESGSGGDACWRLSKYEIDNGNQVQDAVEIVGENVWFSTNFNNYVQKLPTVPEDHHLLAAMVAPRAMISFENTDYLWLSPMSSFGCMTAAHTVWQGLGIADSHGFAQVGGHAHCAWPSSLTPQLNAFINRFLLDQSATTNVFTTNNQFGKVQWNAANWITWTTPTLT.

An N-terminal signal peptide occupies residues 1–17 (MFKPSFVALALVSYATA). Positions 19–55 (ASAPQWGQCGGIGWTGPTACPSGWACQQLNAYYSQCL) constitute a CBM1 domain. Residues 61–91 (APARTTAAPPPPPATTAAPPPPTTSAPTGSS) form a disordered region. Pro residues predominate over residues 68-84 (APPPPPATTAAPPPPTT). Asn-120 is a glycosylation site (N-linked (GlcNAc...) asparagine). A GXSYXG catalytic site motif motif is present at residues 284–289 (GCSRDG). 2 cysteine pairs are disulfide-bonded: Cys-285–Cys-421 and Cys-317–Cys-393. Ser-286 serves as the catalytic Nucleophile. Positions 290, 332, 340, and 384 each coordinate substrate. His-420 serves as the catalytic Proton donor/acceptor.

The protein belongs to the carbohydrate esterase 15 (CE15) family. In terms of processing, N-glycosylated.

It localises to the secreted. It catalyses the reaction a 4-O-methyl-alpha-D-glucuronosyl ester derivative + H2O = 4-O-methyl-alpha-D-glucuronate derivative + an alcohol + H(+). Functionally, glucuronoyl esterase which may play a significant role in biomass degradation, as it is considered to disconnect hemicellulose from lignin through the hydrolysis of the ester bond between 4-O-methyl-D-glucuronic acid residues of glucuronoxylans and aromatic alcohols of lignin. This chain is 4-O-methyl-glucuronoyl methylesterase, found in Cerrena unicolor (Canker rot fungus).